A 165-amino-acid polypeptide reads, in one-letter code: Lipoprotein signal peptidase (165 aa).

Transmembrane regions (helical) follow at residues 9–29 (PFLWISAVAFFTDLITKLAVV), 65–85 (WQKYFFILLALAVSFMILFFL), and 97–119 (TGYALMIGGALANAADRAYHGFV). Active-site residues include Asp121 and Asp139. The helical transmembrane segment at 134 to 154 (VFNVADIAICIGAGLLAIDAF) threads the bilayer.

Belongs to the peptidase A8 family.

Its subcellular location is the cell inner membrane. The enzyme catalyses Release of signal peptides from bacterial membrane prolipoproteins. Hydrolyzes -Xaa-Yaa-Zaa-|-(S,diacylglyceryl)Cys-, in which Xaa is hydrophobic (preferably Leu), and Yaa (Ala or Ser) and Zaa (Gly or Ala) have small, neutral side chains.. It participates in protein modification; lipoprotein biosynthesis (signal peptide cleavage). In terms of biological role, this protein specifically catalyzes the removal of signal peptides from prolipoproteins. The sequence is that of Lipoprotein signal peptidase from Histophilus somni (strain 2336) (Haemophilus somnus).